We begin with the raw amino-acid sequence, 532 residues long: Zinc metalloproteinase nas-29 (532 aa).

The N-terminal stretch at 1-22 (MISKNTSFCGFLILVLATCMSA) is a signal peptide. Residues asparagine 5, asparagine 27, asparagine 70, and asparagine 106 are each glycosylated (N-linked (GlcNAc...) asparagine). The propeptide occupies 23 to 134 (QFVSNESIKL…NGESTDRTKR (112 aa)). The Peptidase M12A domain maps to 135 to 335 (QAYLDNNYPA…HIMNQHYQCQ (201 aa)). Disulfide bonds link cysteine 179–cysteine 334, cysteine 201–cysteine 222, cysteine 338–cysteine 358, cysteine 360–cysteine 369, cysteine 380–cysteine 408, and cysteine 435–cysteine 456. Zn(2+) is bound at residue histidine 230. The active site involves glutamate 231. Histidine 234 and histidine 240 together coordinate Zn(2+). The 41-residue stretch at 330–370 (QHYQCQEKCPTQAPCQNGGFTNSRNCKVCKCPTGFGGAYCQ) folds into the EGF-like domain. Residues 380–494 (CGGYLNAEET…VSFEYSFVST (115 aa)) enclose the CUB domain. A glycan (N-linked (GlcNAc...) asparagine) is linked at asparagine 503.

Zn(2+) is required as a cofactor.

It localises to the secreted. Functionally, metalloprotease. The protein is Zinc metalloproteinase nas-29 (nas-29) of Caenorhabditis elegans.